Here is a 416-residue protein sequence, read N- to C-terminus: L-cysteine:1D-myo-inositol 2-amino-2-deoxy-alpha-D-glucopyranoside ligase (416 aa).

Zn(2+) is bound at residue Cys45. L-cysteinyl-5'-AMP contacts are provided by residues 45–48 (CGIT), Thr60, and 83–85 (NVT). Positions 47–57 (ITPYDSTHLGH) match the 'HIGH' region motif. The 'ERGGDP' region motif lies at 191-196 (ERGGDP). Trp232 contributes to the L-cysteinyl-5'-AMP binding site. Zn(2+) is bound at residue Cys236. 254–256 (GSD) lines the L-cysteinyl-5'-AMP pocket. His261 is a Zn(2+) binding site. Val286 provides a ligand contact to L-cysteinyl-5'-AMP. The 'KMSKS' region signature appears at 292–296 (KMSKS).

This sequence belongs to the class-I aminoacyl-tRNA synthetase family. MshC subfamily. In terms of assembly, monomer. Zn(2+) serves as cofactor.

It carries out the reaction 1D-myo-inositol 2-amino-2-deoxy-alpha-D-glucopyranoside + L-cysteine + ATP = 1D-myo-inositol 2-(L-cysteinylamino)-2-deoxy-alpha-D-glucopyranoside + AMP + diphosphate + H(+). Its function is as follows. Catalyzes the ATP-dependent condensation of GlcN-Ins and L-cysteine to form L-Cys-GlcN-Ins. The chain is L-cysteine:1D-myo-inositol 2-amino-2-deoxy-alpha-D-glucopyranoside ligase from Brachybacterium faecium (strain ATCC 43885 / DSM 4810 / JCM 11609 / LMG 19847 / NBRC 14762 / NCIMB 9860 / 6-10).